A 978-amino-acid polypeptide reads, in one-letter code: Regulator of MON1-CCZ1 complex homolog (978 aa).

Composition is skewed to low complexity over residues Thr311–Ser351 and Asn479–Asn495. Disordered regions lie at residues Thr311–Gln363, Ser474–Thr546, Lys558–Val665, and Glu703–Ile727. Over residues Thr496–Met515 the composition is skewed to polar residues. Low complexity predominate over residues Asn516–Ser539. Gly residues predominate over residues Gly582–Gly591. Composition is skewed to low complexity over residues Ser592–Asn663 and Asn710–Ile727. Residues Lys735–Leu908 enclose the Mic1 domain. Residues Asn955–Asn978 are disordered.

Belongs to the RMC1 family.

The protein resides in the lysosome membrane. It localises to the late endosome membrane. In terms of biological role, may have a role in autophagy. This chain is Regulator of MON1-CCZ1 complex homolog, found in Dictyostelium discoideum (Social amoeba).